The sequence spans 590 residues: Leukocyte immunoglobulin-like receptor subfamily B member 5 (590 aa).

Positions 1-23 are cleaved as a signal peptide; that stretch reads MTLTLSVLICLGLSVGPRTCVQA. Residues 24-458 are Extracellular-facing; it reads GTLPKPTLWA…PQSGLGRHLG (435 aa). 4 consecutive Ig-like C2-type domains span residues 27 to 116, 111 to 228, 224 to 313, and 337 to 418; these read PKPT…LELV, DPLE…SLLI, PSLL…DPLD, and GENV…LVVS. C49 and C98 are joined by a disulfide. A glycan (N-linked (GlcNAc...) asparagine) is linked at N139. 2 cysteine pairs are disulfide-bonded: C144-C195 and C244-C295. N-linked (GlcNAc...) asparagine glycosylation is found at N279 and N339. C344 and C395 are disulfide-bonded. Residues 416–433 are compositionally biased toward low complexity; the sequence is VVSGPSGDPSLSPTGSTP. Residues 416-449 are disordered; the sequence is VVSGPSGDPSLSPTGSTPTPGPEDQPLTPTGLDP. The helical transmembrane segment at 459 to 479 threads the bilayer; the sequence is VVTGVSVAFVLLLFLLLFLLL. The Cytoplasmic portion of the chain corresponds to 480 to 590; sequence RHRHQSKHRT…PSIYAPLAIH (111 aa). Disordered regions lie at residues 488–514 and 529–550; these read RTSAHFYRPAGAAGPEPKDQGLQKRAS and KDTQPKDGVEMDAPAAASEAPQ. Residue S514 is modified to Phosphoserine. The ITIM motif 1 motif lies at 552-557; the sequence is VTYAQL. Over residues 562 to 578 the composition is skewed to basic and acidic residues; it reads LRREATEPPPSQEREPP. Positions 562–590 are disordered; that stretch reads LRREATEPPPSQEREPPAEPSIYAPLAIH. The ITIM motif 2 signature appears at 582–587; the sequence is SIYAPL.

In terms of tissue distribution, detected in a natural killer (NK) cells.

The protein localises to the membrane. May act as receptor for class I MHC antigens. The polypeptide is Leukocyte immunoglobulin-like receptor subfamily B member 5 (LILRB5) (Homo sapiens (Human)).